A 520-amino-acid chain; its full sequence is Probable E3 ubiquitin-protein ligase rbrA (520 aa).

Acidic residues predominate over residues 1–42; it reads MTDDEMYEDYDVDDDSAEESGNESLDDTEYDDAATQEFDFDE. Residues 1–51 are disordered; it reads MTDDEMYEDYDVDDDSAEESGNESLDDTEYDDAATQEFDFDENQPQRSLGK. A TRIAD supradomain region spans residues 135-354; that stretch reads GNVSCLICLE…GGYYNCNKYD (220 aa). Zn(2+) contacts are provided by C139, C142, C156, H158, C161, C164, C184, C189, C228, C233, C250, C252, C257, C260, H268, C273, C300, and C303. The RING-type 1 zinc finger occupies 139 to 189; the sequence is CLICLEDYPPTQTFALICNHRYCLPCYKNYLEIKVSEGPECIYTPCPAPKC. The segment at 208 to 273 adopts an IBR-type zinc-finger fold; it reads ERFNNFILKS…EIGDHMPCPC (66 aa). The segment at 300 to 333 adopts an RING-type 2; atypical zinc-finger fold; it reads CPECRSPIEKNGGCMHMTCRKNAGGCGFEFCWLC. C313 is an active-site residue. Residues C318, C325, C330, C333, H340, and C350 each coordinate Zn(2+).

This sequence belongs to the RBR family.

The catalysed reaction is [E2 ubiquitin-conjugating enzyme]-S-ubiquitinyl-L-cysteine + [acceptor protein]-L-lysine = [E2 ubiquitin-conjugating enzyme]-L-cysteine + [acceptor protein]-N(6)-ubiquitinyl-L-lysine.. It functions in the pathway protein modification; protein ubiquitination. Its function is as follows. Might act as an E3 ubiquitin-protein ligase. Appears to be required for normal cell-type proportioning and cell sorting during multicellular development. In addition to being necessary for a normal percentage of prestalk cells and the organization of the slug, rbrA is also necessary for spore cell viability. The chain is Probable E3 ubiquitin-protein ligase rbrA (rbrA) from Dictyostelium discoideum (Social amoeba).